Reading from the N-terminus, the 57-residue chain is Large ribosomal subunit protein bL32 (57 aa).

Belongs to the bacterial ribosomal protein bL32 family.

The polypeptide is Large ribosomal subunit protein bL32 (Bacillus pumilus (strain SAFR-032)).